Reading from the N-terminus, the 213-residue chain is ATP-dependent dethiobiotin synthetase BioD 2 (213 aa).

D13–I18 lines the ATP pocket. Mg(2+) is bound at residue T17. K38 is a catalytic residue. T42 contacts substrate. Residues D50 and E115–G118 each bind ATP. Positions 50 and 115 each coordinate Mg(2+).

Belongs to the dethiobiotin synthetase family. Homodimer. Mg(2+) is required as a cofactor.

The protein resides in the cytoplasm. The enzyme catalyses (7R,8S)-7,8-diammoniononanoate + CO2 + ATP = (4R,5S)-dethiobiotin + ADP + phosphate + 3 H(+). It functions in the pathway cofactor biosynthesis; biotin biosynthesis; biotin from 7,8-diaminononanoate: step 1/2. Functionally, catalyzes a mechanistically unusual reaction, the ATP-dependent insertion of CO2 between the N7 and N8 nitrogen atoms of 7,8-diaminopelargonic acid (DAPA, also called 7,8-diammoniononanoate) to form a ureido ring. The polypeptide is ATP-dependent dethiobiotin synthetase BioD 2 (Pasteurella multocida (strain Pm70)).